The sequence spans 246 residues: Large ribosomal subunit protein uL4 (246 aa).

The disordered stretch occupies residues 37–103; sequence AAQANRKQDY…TEKDRSLDLN (67 aa). The span at 92-103 shows a compositional bias: basic and acidic residues; that stretch reads PKTEKDRSLDLN.

The protein belongs to the universal ribosomal protein uL4 family. As to quaternary structure, part of the 50S ribosomal subunit. Interacts weakly with proteins L18e, L24 and L37e. Has been cross-linked to L18e.

One of the primary rRNA binding proteins, this protein initially binds near the 5'-end of the 23S rRNA. It is important during the early stages of 50S assembly. Functionally, makes multiple contacts with different domains of the 23S rRNA in the assembled 50S subunit. Its function is as follows. Forms part of the polypeptide exit tunnel, in which it helps forms a bend with protein L22. Contacts the macrolide antibiotic spiramycin in the polypeptide exit tunnel. The sequence is that of Large ribosomal subunit protein uL4 (rpl4) from Haloarcula marismortui (strain ATCC 43049 / DSM 3752 / JCM 8966 / VKM B-1809) (Halobacterium marismortui).